Here is a 5289-residue protein sequence, read N- to C-terminus: Mucin-2 (5289 aa).

The N-terminal stretch at 1–20 is a signal peptide; that stretch reads MGLPLARLAAVCLALSLAGG. Serine 21 bears the Phosphoserine mark. Histidine 34 is a Cu(2+) binding site. In terms of domain architecture, VWFD 1 spans 35–207; it reads NVCSTWGNFH…KINQPDVVCE (173 aa). Disulfide bonds link cysteine 37–cysteine 169, cysteine 59–cysteine 206, cysteine 67–cysteine 166, cysteine 218–cysteine 255, cysteine 225–cysteine 250, cysteine 237–cysteine 275, cysteine 257–cysteine 263, cysteine 265–cysteine 291, cysteine 295–cysteine 329, cysteine 308–cysteine 321, cysteine 312–cysteine 351, cysteine 331–cysteine 345, cysteine 353–cysteine 375, cysteine 370–cysteine 387, cysteine 373–cysteine 382, cysteine 391–cysteine 528, cysteine 413–cysteine 563, cysteine 435–cysteine 443, cysteine 574–cysteine 619, cysteine 588–cysteine 614, cysteine 601–cysteine 639, cysteine 621–cysteine 627, cysteine 629–cysteine 654, cysteine 661–cysteine 698, cysteine 674–cysteine 688, cysteine 678–cysteine 718, cysteine 700–cysteine 712, cysteine 720–cysteine 742, and cysteine 740–cysteine 749. Ca(2+) is bound at residue aspartate 49. Cu(+) contacts are provided by methionine 146 and methionine 154. Residue glutamate 156 coordinates Cu(2+). Asparagine 163 is a glycosylation site (N-linked (GlcNAc...) asparagine). Ca(2+) contacts are provided by aspartate 171, asparagine 173, leucine 175, and glutamate 180. Cu(2+) is bound at residue histidine 277. One can recognise a TIL domain in the interval 295-351; that stretch reads CPGNLVYLESGSPCMDTCSHLEVSSLCEEHRMDGCFCPEGTVYDDIGDSGCVPVSQC. Histidine 324 is a Cu(2+) binding site. Methionine 326 is a binding site for Cu(+). The 176-residue stretch at 389-564 folds into the VWFD 2 domain; sequence GTCALEGGSH…NTWKAQSSCH (176 aa). Aspartate 403 is a binding site for Ca(2+). The N-linked (GlcNAc...) asparagine glycan is linked to asparagine 423. Residues asparagine 530, asparagine 532, leucine 534, aspartate 537, and aspartate 538 each contribute to the Ca(2+) site. An N-linked (GlcNAc...) asparagine glycan is attached at asparagine 670. Residue asparagine 770 is glycosylated (N-linked (GlcNAc...) asparagine). Cystine bridges form between cysteine 784–cysteine 820, cysteine 802–cysteine 814, cysteine 822–cysteine 844, cysteine 839–cysteine 856, cysteine 842–cysteine 851, cysteine 860–cysteine 992, cysteine 882–cysteine 1027, cysteine 891–cysteine 989, cysteine 909–cysteine 916, cysteine 1037–cysteine 1080, cysteine 1051–cysteine 1075, cysteine 1062–cysteine 1102, cysteine 1082–cysteine 1090, cysteine 1092–cysteine 1117, cysteine 1108–cysteine 1137, cysteine 1121–cysteine 1163, cysteine 1145–cysteine 1187, cysteine 1167–cysteine 1181, cysteine 1189–cysteine 1213, cysteine 1208–cysteine 1238, and cysteine 1211–cysteine 1221. The VWFD 3 domain maps to 858-1028; that stretch reads GTCSIYGSGH…NSWKEAPTCP (171 aa). Residue aspartate 872 participates in Ca(2+) binding. Asparagine 894 carries an N-linked (GlcNAc...) asparagine glycan. Ca(2+)-binding residues include asparagine 994, aspartate 996, arginine 998, asparagine 1001, and aspartate 1002. 2 N-linked (GlcNAc...) asparagine glycosylation sites follow: asparagine 1139 and asparagine 1154. Asparagine 1215, asparagine 1230, and asparagine 1246 each carry an N-linked (GlcNAc...) asparagine glycan. O-linked (GalNAc) threonine glycosylation is found at threonine 1266, threonine 1267, threonine 1269, threonine 1270, threonine 1272, threonine 1275, threonine 1276, threonine 1281, threonine 1282, and threonine 1287. O-linked (GalNAc) serine glycosylation is found at serine 1291 and serine 1292. O-linked (GalNAc) threonine glycosylation is present at threonine 1293. Serine 1296 carries O-linked (GalNAc) serine glycosylation. A glycan (O-linked (GalNAc) threonine) is linked at threonine 1297. 10 residues coordinate Ca(2+): asparagine 1310, aspartate 1312, histidine 1313, serine 1316, aspartate 1319, glycine 1321, aspartate 1322, glutamate 1324, aspartate 1381, and tyrosine 1382. Pro residues-rich tracts occupy residues 1399–1411, 1419–1510, 1520–1549, 1559–1628, and 1638–1679; these read PSPP…PPPT, TTTP…PITP, and TTTP…PPTT. Residues 1399 to 1773 are disordered; sequence PSPPTTTPSP…SITPPTFSPF (375 aa). 6 tandem repeats follow at residues 1401 to 1416, 1417 to 1432, 1433 to 1448, 1449 to 1464, 1465 to 1471, and 1472 to 1478. An approximate repeats region spans residues 1401 to 1747; that stretch reads PPTTTPSPPP…SPPTTTMTTL (347 aa). The stretch at 1479 to 1494 is one 7A repeat; sequence PPTTTPSPPTTTTTTP. A 7B repeat occupies 1495 to 1517; that stretch reads PPTTTPSPPTTTPITPPASTTTL. One copy of the 8A repeat lies at 1518–1533; sequence PPTTTPSPPTTTTTTP. The stretch at 1534-1556 is one 8B repeat; that stretch reads PPTTTPSPPTTTPITPPTSTTTL. The 9A repeat unit spans residues 1557–1572; it reads PPTTTPSPPPTTTTTP. Residues 1573 to 1596 form a 9B repeat; sequence PPTTTPSPPTTTTPSPPTITTTTP. The stretch at 1597-1612 is one 10A repeat; it reads PPTTTPSPPTTTTTTP. One copy of the 10B repeat lies at 1613–1635; sequence PPTTTPSPPTTTPITPPTSTTTL. One copy of the 11A repeat lies at 1636-1651; it reads PPTTTPSPPPTTTTTP. The 11B repeat unit spans residues 1652–1675; the sequence is PPTTTPSPPTTTTPSPPITTTTTP. A run of 5 repeats spans residues 1676 to 1683, 1684 to 1699, 1700 to 1715, 1716 to 1731, and 1732 to 1747. Composition is skewed to low complexity over residues 1680–1720 and 1741–1759; these read TPSS…STTT and TTTM…LTTT. Positions 1760–1770 are enriched in pro residues; the sequence is PLPPSITPPTF. 2 N-linked (GlcNAc...) asparagine glycosylation sites follow: asparagine 1787 and asparagine 1820. 4 stretches are compositionally biased toward low complexity: residues 1885–2158, 2165–4238, 4269–4315, and 4329–4430; these read MTTT…TMVT, GTQT…QTPT, TTVT…STAP, and STPQ…PSII. 2 disordered regions span residues 1885–4238 and 4269–4430; these read MTTT…QTPT and TTVT…PSII. Asparagine 4449, asparagine 4461, asparagine 4472, and asparagine 4483 each carry an N-linked (GlcNAc...) asparagine glycan. Residues 4492 to 4524 form a disordered region; sequence PTPTPSKSTPTPSKPSSTPSKPTPGTKPPECPD. The segment covering 4496–4511 has biased composition (low complexity); sequence PSKSTPTPSKPSSTPS. Pro residues predominate over residues 4512-4522; sequence KPTPGTKPPEC. Residues asparagine 4532, asparagine 4548, and asparagine 4612 are each glycosylated (N-linked (GlcNAc...) asparagine). One can recognise a VWFD 4 domain in the interval 4589–4772; it reads CYCTGWGDPH…VNDPSKPHCP (184 aa). Intrachain disulfides connect cysteine 4591–cysteine 4732, cysteine 4613–cysteine 4771, and cysteine 4637–cysteine 4645. N-linked (GlcNAc...) asparagine glycans are attached at residues asparagine 4726 and asparagine 4737. Residues 4770–4795 are disordered; it reads HCPHSSSTTKRPAVTVPGGGKTTPHK. N-linked (GlcNAc...) asparagine glycosylation is found at asparagine 4862, asparagine 4897, asparagine 4991, asparagine 4998, asparagine 5065, asparagine 5080, asparagine 5129, asparagine 5148, and asparagine 5179. The VWFC 1 domain maps to 4927–4996; sequence CVGPDNVPRE…DTCCNITVCK (70 aa). Residues 5034 to 5101 enclose the VWFC 2 domain; the sequence is GVCVHGNAEY…APGECCKKCE (68 aa). 4 disulfides stabilise this stretch: cysteine 5185–cysteine 5232, cysteine 5199–cysteine 5246, cysteine 5208–cysteine 5262, and cysteine 5212–cysteine 5264. The region spanning 5185-5270 is the CTCK domain; the sequence is CSTVPVTTEV…SCQCQDTVCG (86 aa).

Homomultimer; disulfide-linked. The N- and C-terminus mediate their assembly into higher order structures to form filaments. The CTCK domains of two polypeptides associate in the endoplasmic reticulum to generate intermolecularly disulfide-bonded dimers. These dimers progress to the Golgi apparatus, which is a more acidic environment than the endoplasmic reticulum. Under acidic conditions, the N-termini form non-covalent intermolecular interactions that juxtapose assemblies of the third VWD domain (VWD3) from different CTCK-linked dimers. The VWD3 assemblies then become disulfide bonded to one another to produce long, disulfide-linked polymers that remain highly compact until secretion. Interacts with FCGBP. Interacts with AGR2; disulfide-linked. In terms of assembly, (Microbial infection) Interacts in vitro with L.monocytogenes internalin proteins InlB, InlC and InlJ; for InlC binding is slightly better at pH 5.5, (the pH of the intestine) than at pH 7.4. O-glycosylated. O-glycosylation is required for mucin assembly. Goblet cells synthesize two forms of mucin that differ in branched chain O-glycosylation and the site of production in the colon. Post-translationally, may undergo proteolytic cleavage in the outer mucus layer of the colon, contributing to the expanded volume and loose nature of this layer which allows for bacterial colonization in contrast to the inner mucus layer which is dense and devoid of bacteria. In terms of processing, at low pH of 6 and under, undergoes autocatalytic cleavage in vitro in the N-terminal region of the fourth VWD domain. It is likely that this also occurs in vivo and is triggered by the low pH of the late secretory pathway. Colon, small intestine, colonic tumors, bronchus, cervix and gall bladder.

The protein resides in the secreted. Functionally, coats the epithelia of the intestines and other mucus membrane-containing organs to provide a protective, lubricating barrier against particles and infectious agents at mucosal surfaces. Major constituent of the colon mucus, which is mainly formed by large polymeric networks of MUC2 secreted by goblet cells that cover the exposed surfaces of intestine. MUC2 networks form hydrogels that guard the underlying epithelium from pathogens and other hazardous matter entering from the outside world, while permitting nutrient absorption and gas exchange. Acts as a divalent copper chaperone that protects intestinal cells from copper toxicity and facilitates nutritional copper unptake into cells. Binds both Cu(2+) and its reduced form, Cu(1+), at two juxtaposed binding sites: Cu(2+), once reduced to Cu(1+) by vitamin C (ascorbate) or other dietary antioxidants, transits to the other binding site. MUC2-bound Cu(1+) is protected from oxidation in aerobic environments, and can be released for nutritional delivery to cells. Mucin gels store antimicrobial molecules that participate in innate immunity. Mucin glycoproteins also house and feed the microbiome, lubricate tissue surfaces, and may facilitate the removal of contaminants and waste products from the body. Goblet cells synthesize two forms of MUC2 mucin that differ in branched chain O-glycosylation and the site of production in the colon: a (1) 'thick' mucus that wraps the microbiota to form fecal pellets is produced in the proximal, ascending colon. 'Thick' mucus transits along the descending colon and is lubricated by a (2) 'thin' MUC2 mucus produced in the distal colon which adheres to the 'thick' mucus. This Homo sapiens (Human) protein is Mucin-2.